We begin with the raw amino-acid sequence, 606 residues long: NADH-ubiquinone oxidoreductase chain 5 (606 aa).

N-formylmethionine is present on M1. 15 helical membrane-spanning segments follow: residues 4 to 24 (FSSLSLVTLLLLTMPIMMMSF), 43 to 63 (AFITSMIPTMMFIHSGQELII), 87 to 107 (MMFIPVALFVTWSIMEFSMWY), 117 to 137 (FFKYLLLFLITMLILVTANNL), 140 to 160 (LFIGWEGVGIMSFLLIGWWYG), 171 to 191 (AILYNRIGDIGFILAMAWFLT), 213 to 233 (LIGLALAATGKSAQFGLHPWL), 241 to 261 (TPVSALLHSSTMVVAGIFLLI), 273 to 293 (IQSITLCLGAITTLFTAMCAL), 310 to 330 (LGLMMVTIGINQPYLAFLHIC), 366 to 386 (MPFTTTALIVGSLALTGMPFL), 413 to 433 (LIATSFTAIYSTRIIFFALLG), 457 to 477 (LLIGSLFAGYIISNNIPPTTI), 482 to 502 (MPYYLKTTALIVTILGFILAL), and 582 to 602 (GLIKLYFLSFLITILISMILF).

Core subunit of respiratory chain NADH dehydrogenase (Complex I) which is composed of 45 different subunits.

It localises to the mitochondrion inner membrane. The catalysed reaction is a ubiquinone + NADH + 5 H(+)(in) = a ubiquinol + NAD(+) + 4 H(+)(out). Its function is as follows. Core subunit of the mitochondrial membrane respiratory chain NADH dehydrogenase (Complex I) which catalyzes electron transfer from NADH through the respiratory chain, using ubiquinone as an electron acceptor. Essential for the catalytic activity and assembly of complex I. The polypeptide is NADH-ubiquinone oxidoreductase chain 5 (MT-ND5) (Bos taurus (Bovine)).